We begin with the raw amino-acid sequence, 340 residues long: Ornithine carbamoyltransferase (340 aa).

Residues 57–60, Gln-84, Arg-108, and 135–138 contribute to the carbamoyl phosphate site; these read STRT and HPTQ. Residues Asn-167, Asp-231, and 235 to 236 each bind L-ornithine; that span reads SM. Residues 272-273 and Arg-317 each bind carbamoyl phosphate; that span reads CL.

The protein belongs to the aspartate/ornithine carbamoyltransferase superfamily. OTCase family.

Its subcellular location is the cytoplasm. The enzyme catalyses carbamoyl phosphate + L-ornithine = L-citrulline + phosphate + H(+). The protein operates within amino-acid biosynthesis; L-arginine biosynthesis; L-arginine from L-ornithine and carbamoyl phosphate: step 1/3. Reversibly catalyzes the transfer of the carbamoyl group from carbamoyl phosphate (CP) to the N(epsilon) atom of ornithine (ORN) to produce L-citrulline. The sequence is that of Ornithine carbamoyltransferase (argF) from Lactiplantibacillus plantarum (strain ATCC BAA-793 / NCIMB 8826 / WCFS1) (Lactobacillus plantarum).